The primary structure comprises 185 residues: Ribosome-recycling factor (185 aa).

This sequence belongs to the RRF family.

It is found in the cytoplasm. In terms of biological role, responsible for the release of ribosomes from messenger RNA at the termination of protein biosynthesis. May increase the efficiency of translation by recycling ribosomes from one round of translation to another. This is Ribosome-recycling factor from Geobacillus thermodenitrificans (strain NG80-2).